Reading from the N-terminus, the 408-residue chain is Na(+)/H(+) antiporter NhaA (408 aa).

The next 12 helical transmembrane spans lie at 42 to 62, 69 to 89, 110 to 130, 140 to 160, 169 to 189, 192 to 212, 215 to 235, 238 to 258, 277 to 297, 312 to 332, 346 to 366, and 380 to 400; these read LMFV…PVYF, VLGL…FFLL, ALPG…FIAV, GWAI…SLLG, IFLT…IALF, AELT…LAAL, FGVK…FFVL, GIHA…QAST, VAFL…FAGL, LGLF…AIWL, LYGV…IGLL, and IGVL…LRVT.

It belongs to the NhaA Na(+)/H(+) (TC 2.A.33) antiporter family.

Its subcellular location is the cell inner membrane. It carries out the reaction Na(+)(in) + 2 H(+)(out) = Na(+)(out) + 2 H(+)(in). Na(+)/H(+) antiporter that extrudes sodium in exchange for external protons. This chain is Na(+)/H(+) antiporter NhaA, found in Nitrobacter hamburgensis (strain DSM 10229 / NCIMB 13809 / X14).